A 476-amino-acid chain; its full sequence is Inosine-5'-monophosphate dehydrogenase (476 aa).

CBS domains follow at residues 92-150 and 151-207; these read MIEN…IADV and MTKD…PNAS. NAD(+) is bound by residues D244 and 294 to 296; that span reads GVG. Residues G296 and G298 each coordinate K(+). S299 contacts IMP. C301 lines the K(+) pocket. C301 acts as the Thioimidate intermediate in catalysis. IMP contacts are provided by residues 334 to 336, 357 to 358, 381 to 385, and E413; these read DGG, GS, and YRGMA. Residues E467 and S468 each coordinate K(+).

This sequence belongs to the IMPDH/GMPR family. In terms of assembly, homotetramer. The cofactor is K(+).

The enzyme catalyses IMP + NAD(+) + H2O = XMP + NADH + H(+). It functions in the pathway purine metabolism; XMP biosynthesis via de novo pathway; XMP from IMP: step 1/1. With respect to regulation, mycophenolic acid (MPA) is a non-competitive inhibitor that prevents formation of the closed enzyme conformation by binding to the same site as the amobile flap. In contrast, mizoribine monophosphate (MZP) is a competitive inhibitor that induces the closed conformation. MPA is a potent inhibitor of mammalian IMPDHs but a poor inhibitor of the bacterial enzymes. MZP is a more potent inhibitor of bacterial IMPDH. Catalyzes the conversion of inosine 5'-phosphate (IMP) to xanthosine 5'-phosphate (XMP), the first committed and rate-limiting step in the de novo synthesis of guanine nucleotides, and therefore plays an important role in the regulation of cell growth. The chain is Inosine-5'-monophosphate dehydrogenase from Nitrosopumilus maritimus (strain SCM1).